The chain runs to 5538 residues: Leashin (5538 aa).

The span at Met1–Arg10 shows a compositional bias: gly residues. Disordered regions lie at residues Met1–Gly270, Glu286–Ile315, Leu331–His365, Ser510–Ser555, Thr596–Gln712, Ala800–Gly901, Ala913–Thr944, Asn1027–Phe1145, Val1164–Asp1297, Pro1310–Ser1398, Glu1432–Glu1993, Ser2067–Phe2146, Asn2165–Ala2207, Pro2233–Ile3065, Met3077–Ser3894, Glu3910–Leu4034, Lys4072–Leu4128, Glu4238–Ala4421, Pro4442–Asp4463, Leu4509–Thr4698, Lys4733–Ala4850, and Ala4910–Arg5052. The woronin bodies-binding region stretch occupies residues Met1–Arg1100. Residues Ser14–Ser23 show a composition bias toward low complexity. 2 stretches are compositionally biased toward basic and acidic residues: residues Ser42–Leu51 and Val89–Arg167. The segment covering Ala299 to Phe313 has biased composition (polar residues). Over residues Pro334–Pro352 the composition is skewed to pro residues. Residues Pro514–Arg523 show a composition bias toward basic residues. Positions Ser598–Thr607 are enriched in polar residues. The segment covering His639–Ser655 has biased composition (basic residues). Residues Ala660 to Ala674 show a composition bias toward low complexity. The segment covering Ser682–Lys698 has biased composition (basic residues). The span at Arg809–Asp825 shows a compositional bias: basic and acidic residues. Composition is skewed to low complexity over residues Gly842 to Ser851 and Gly862 to Trp880. Basic residues predominate over residues Gly881–Ala891. Basic and acidic residues-rich tracts occupy residues Leu1068–Arg1091, Ile1098–Phe1145, Ser1178–Glu1198, Ser1207–Glu1226, Trp1356–Glu1365, Ser1375–Pro1387, Gly1447–Ser1462, and Glu1478–Glu1488. A compositionally biased stretch (low complexity) spans Gln1506–Ser1516. 3 stretches are compositionally biased toward basic and acidic residues: residues Val1521–Arg1536, Gly1549–Ala1559, and Glu1572–Ser1594. Positions Lys1639 to Lys1648 are enriched in basic residues. 3 stretches are compositionally biased toward basic and acidic residues: residues Glu1672–Ala1686, Glu1700–Glu1773, and Lys1788–Glu1800. Composition is skewed to low complexity over residues Pro1867–Ala1876 and Ser1889–Leu1898. The span at Lys1950 to Glu1975 shows a compositional bias: basic and acidic residues. 2 stretches are compositionally biased toward polar residues: residues Lys1984–Glu1993 and Thr2121–Ser2130. Composition is skewed to basic and acidic residues over residues Asp2187–Ala2196, Val2269–Val2279, and Gly2307–Asn2320. Residues Ala2321–Gln2331 are compositionally biased toward polar residues. Over residues Ala2344 to Arg2355 the composition is skewed to basic residues. The segment covering Met2358–Asp2370 has biased composition (polar residues). Positions Asp2427–Leu2441 are enriched in basic and acidic residues. Positions Ala2449–Thr2461 are enriched in low complexity. Positions Lys2473–Lys2484 are enriched in basic residues. Over residues Asp2494–Pro2525 the composition is skewed to polar residues. Composition is skewed to basic and acidic residues over residues Asn2580–Glu2590, Pro2647–Ser2661, and Ala2677–Glu2691. Over residues Glu2719–Arg2734 the composition is skewed to low complexity. The segment covering Lys2735–Lys2747 has biased composition (basic residues). Basic and acidic residues predominate over residues Asp2796–Thr2812. The span at Lys2874 to Lys2884 shows a compositional bias: basic residues. The segment covering Thr2885–Glu2894 has biased composition (polar residues). 2 stretches are compositionally biased toward basic residues: residues Lys3003–Gln3013 and Lys3089–Gln3100. A compositionally biased stretch (basic and acidic residues) spans Ala3145–Pro3172. Over residues Pro3248–Glu3268 the composition is skewed to low complexity. Residues Glu3293–Thr3303 show a composition bias toward polar residues. Positions Ser3329–Gln3341 are enriched in basic residues. Over residues Asp3347–Pro3367 the composition is skewed to basic and acidic residues. Composition is skewed to low complexity over residues Thr3397 to Ser3409 and Glu3422 to Ala3435. Basic residues predominate over residues Lys3436 to Ser3450. Positions Glu3480 to Ser3495 are enriched in basic and acidic residues. The segment covering Glu3547–Ala3564 has biased composition (low complexity). Composition is skewed to polar residues over residues Ser3565–Glu3580 and Val3604–Gly3613. 2 stretches are compositionally biased toward basic residues: residues Lys3642 to Arg3652 and Lys3716 to Ser3730. The span at Thr3768–Ser3787 shows a compositional bias: polar residues. Basic and acidic residues predominate over residues Lys3800–Trp3819. Over residues Met3823–Asp3837 the composition is skewed to polar residues. Positions Asp3876–Val3893 are enriched in basic and acidic residues. 2 stretches are compositionally biased toward polar residues: residues Ile3915 to Val3925 and Lys3965 to Lys3980. Residues Thr4010–Gln4020 show a composition bias toward acidic residues. A compositionally biased stretch (basic and acidic residues) spans Glu4111 to Ala4123. Residues Lys4244–Lys4255 are compositionally biased toward basic residues. Positions Leu4328–Glu4345 are enriched in polar residues. The segment covering Lys4378 to Ser4391 has biased composition (basic residues). Residues Ala4392–Asn4406 are compositionally biased toward basic and acidic residues. Positions Ala4495–Ile5538 are septal pore-binding region. Residues Thr4554–Ala4570 are compositionally biased toward polar residues. 2 stretches are compositionally biased toward basic and acidic residues: residues Ile4574–Lys4591 and Glu4660–Pro4673. A compositionally biased stretch (low complexity) spans Ser4940 to Val4954. Residues Arg4966–Ala4988 are compositionally biased toward polar residues. Pro residues predominate over residues Thr4989 to Ser4998. Positions His5050 to Asp5223 form a coiled coil.

In terms of assembly, binds directly or indirectly to the Woronin body major protein hexA.

Its subcellular location is the cell septum. Functionally, acts as the tether and is essential for anchoring of Woronin bodies at the septal pore. In damaged hyphae, Woronin bodies occlude septal pores in order to separate intact from damaged compartments. The protein is Leashin of Aspergillus fumigatus (strain ATCC MYA-4609 / CBS 101355 / FGSC A1100 / Af293) (Neosartorya fumigata).